A 550-amino-acid polypeptide reads, in one-letter code: Arginine--tRNA ligase (550 aa).

The short motif at 130–140 (ANPTGPIHLGG) is the 'HIGH' region element.

This sequence belongs to the class-I aminoacyl-tRNA synthetase family. In terms of assembly, monomer.

The protein resides in the cytoplasm. It carries out the reaction tRNA(Arg) + L-arginine + ATP = L-arginyl-tRNA(Arg) + AMP + diphosphate. The protein is Arginine--tRNA ligase of Corynebacterium efficiens (strain DSM 44549 / YS-314 / AJ 12310 / JCM 11189 / NBRC 100395).